Here is an 845-residue protein sequence, read N- to C-terminus: Alanine--tRNA ligase (845 aa).

His552, His556, Cys653, and His657 together coordinate Zn(2+).

Belongs to the class-II aminoacyl-tRNA synthetase family. The cofactor is Zn(2+).

The protein localises to the cytoplasm. It catalyses the reaction tRNA(Ala) + L-alanine + ATP = L-alanyl-tRNA(Ala) + AMP + diphosphate. Catalyzes the attachment of alanine to tRNA(Ala) in a two-step reaction: alanine is first activated by ATP to form Ala-AMP and then transferred to the acceptor end of tRNA(Ala). Also edits incorrectly charged Ser-tRNA(Ala) and Gly-tRNA(Ala) via its editing domain. The chain is Alanine--tRNA ligase from Campylobacter fetus subsp. fetus (strain 82-40).